Here is a 646-residue protein sequence, read N- to C-terminus: Serine/threonine-protein kinase PLK3 (646 aa).

Residues 1-35 (MEPAAGFLSPRPFQRAAAAPAPPAGPGPPPSALRG) are disordered. Low complexity predominate over residues 10–19 (PRPFQRAAAA). A compositionally biased stretch (pro residues) spans 20 to 31 (PAPPAGPGPPPS). A Protein kinase domain is found at 62–314 (YLKGRLLGKG…IDQILRHDFF (253 aa)). ATP contacts are provided by residues 68-76 (LGKGGFARC) and Lys-91. Catalysis depends on Asp-185, which acts as the Proton acceptor. A disordered region spans residues 381–417 (GHQDARPEAPAASGPAPVSLVETAPEDSSPRGTLASS). POLO box domains follow at residues 463-541 (WVSK…YMEQ) and 562-645 (LLLQ…DRSP).

This sequence belongs to the protein kinase superfamily. Ser/Thr protein kinase family. CDC5/Polo subfamily. In terms of assembly, interacts (via the POLO-box domain) with CIB1; leading to inhibit PLK3 kinase activity. Interacts with GOLGB1. In terms of processing, phosphorylated in an ATM-dependent manner following DNA damage. Phosphorylated as cells enter mitosis and dephosphorylated as cells exit mitosis. Transcripts are highly detected in placenta, lung, followed by skeletal muscle, heart, pancreas, ovaries and kidney and weakly detected in liver and brain. May have a short half-live. In cells of hematopoietic origin, strongly and exclusively detected in terminally differentiated macrophages. Transcript expression appears to be down-regulated in primary lung tumor.

The protein resides in the cytoplasm. It localises to the nucleus. The protein localises to the nucleolus. Its subcellular location is the golgi apparatus. It is found in the cytoskeleton. The protein resides in the microtubule organizing center. It localises to the centrosome. The enzyme catalyses L-seryl-[protein] + ATP = O-phospho-L-seryl-[protein] + ADP + H(+). It catalyses the reaction L-threonyl-[protein] + ATP = O-phospho-L-threonyl-[protein] + ADP + H(+). Functionally, serine/threonine-protein kinase involved in cell cycle regulation, response to stress and Golgi disassembly. Polo-like kinases act by binding and phosphorylating proteins that are already phosphorylated on a specific motif recognized by the POLO box domains. Phosphorylates ATF2, BCL2L1, CDC25A, CDC25C, CHEK2, HIF1A, JUN, p53/TP53, p73/TP73, PTEN, TOP2A and VRK1. Involved in cell cycle regulation: required for entry into S phase and cytokinesis. Phosphorylates BCL2L1, leading to regulate the G2 checkpoint and progression to cytokinesis during mitosis. Plays a key role in response to stress: rapidly activated upon stress stimulation, such as ionizing radiation, reactive oxygen species (ROS), hyperosmotic stress, UV irradiation and hypoxia. Involved in DNA damage response and G1/S transition checkpoint by phosphorylating CDC25A, p53/TP53 and p73/TP73. Phosphorylates p53/TP53 in response to reactive oxygen species (ROS), thereby promoting p53/TP53-mediated apoptosis. Phosphorylates CHEK2 in response to DNA damage, promoting the G2/M transition checkpoint. Phosphorylates the transcription factor p73/TP73 in response to DNA damage, leading to inhibit p73/TP73-mediated transcriptional activation and pro-apoptotic functions. Phosphorylates HIF1A and JUN is response to hypoxia. Phosphorylates ATF2 following hyperosmotic stress in corneal epithelium. Also involved in Golgi disassembly during the cell cycle: part of a MEK1/MAP2K1-dependent pathway that induces Golgi fragmentation during mitosis by mediating phosphorylation of VRK1. May participate in endomitotic cell cycle, a form of mitosis in which both karyokinesis and cytokinesis are interrupted and is a hallmark of megakaryocyte differentiation, via its interaction with CIB1. In Homo sapiens (Human), this protein is Serine/threonine-protein kinase PLK3 (PLK3).